A 207-amino-acid polypeptide reads, in one-letter code: Large ribosomal subunit protein bL25 (207 aa).

Belongs to the bacterial ribosomal protein bL25 family. CTC subfamily. In terms of assembly, part of the 50S ribosomal subunit; part of the 5S rRNA/L5/L18/L25 subcomplex. Contacts the 5S rRNA. Binds to the 5S rRNA independently of L5 and L18.

Its function is as follows. This is one of the proteins that binds to the 5S RNA in the ribosome where it forms part of the central protuberance. In Brucella canis (strain ATCC 23365 / NCTC 10854 / RM-666), this protein is Large ribosomal subunit protein bL25.